The primary structure comprises 621 residues: Threonine--tRNA ligase (621 aa).

Residues methionine 1–serine 137 are editing domain. The disordered stretch occupies residues glutamate 128–leucine 150. The tract at residues proline 202–proline 501 is catalytic. Residues cysteine 294, histidine 346, and histidine 470 each coordinate Zn(2+). Over residues glutamine 598 to histidine 612 the composition is skewed to polar residues. The segment at glutamine 598 to valine 621 is disordered.

The protein belongs to the class-II aminoacyl-tRNA synthetase family. As to quaternary structure, homodimer. The cofactor is Zn(2+).

It localises to the cytoplasm. It catalyses the reaction tRNA(Thr) + L-threonine + ATP = L-threonyl-tRNA(Thr) + AMP + diphosphate + H(+). In terms of biological role, catalyzes the attachment of threonine to tRNA(Thr) in a two-step reaction: L-threonine is first activated by ATP to form Thr-AMP and then transferred to the acceptor end of tRNA(Thr). Also edits incorrectly charged L-seryl-tRNA(Thr). The chain is Threonine--tRNA ligase from Nitrosopumilus maritimus (strain SCM1).